A 126-amino-acid polypeptide reads, in one-letter code: UPF0344 protein ABC2900 (126 aa).

A run of 4 helical transmembrane segments spans residues 16–36 (ASHE…YFLF), 43–63 (AGTI…VTGA), 66–86 (LIAY…VLLI), and 104–124 (GMLF…YGII).

The protein belongs to the UPF0344 family.

It localises to the cell membrane. The polypeptide is UPF0344 protein ABC2900 (Shouchella clausii (strain KSM-K16) (Alkalihalobacillus clausii)).